Here is a 407-residue protein sequence, read N- to C-terminus: Phosphopentomutase (407 aa).

Positions 10, 306, 311, 347, 348, and 359 each coordinate Mn(2+).

This sequence belongs to the phosphopentomutase family. Mn(2+) serves as cofactor.

It is found in the cytoplasm. It carries out the reaction 2-deoxy-alpha-D-ribose 1-phosphate = 2-deoxy-D-ribose 5-phosphate. It catalyses the reaction alpha-D-ribose 1-phosphate = D-ribose 5-phosphate. It functions in the pathway carbohydrate degradation; 2-deoxy-D-ribose 1-phosphate degradation; D-glyceraldehyde 3-phosphate and acetaldehyde from 2-deoxy-alpha-D-ribose 1-phosphate: step 1/2. Isomerase that catalyzes the conversion of deoxy-ribose 1-phosphate (dRib-1-P) and ribose 1-phosphate (Rib-1-P) to deoxy-ribose 5-phosphate (dRib-5-P) and ribose 5-phosphate (Rib-5-P), respectively. The protein is Phosphopentomutase of Buchnera aphidicola subsp. Acyrthosiphon pisum (strain Tuc7).